The primary structure comprises 87 residues: Developmentally-regulated ectodermal protein (87 aa).

The first 16 residues, 1-16 (MKRLLVLTLVSAILMA), serve as a signal peptide directing secretion.

The chain is Developmentally-regulated ectodermal protein from Tripneustes gratilla (Hawaian sea urchin).